Consider the following 844-residue polypeptide: Rho guanine nucleotide exchange factor 33 (844 aa).

Basic and acidic residues-rich tracts occupy residues 1–13 (MEKT…ENEH) and 101–113 (QQKI…EKRR). 3 disordered regions span residues 1-20 (MEKT…NNPS), 101-142 (QQKI…GSPF), and 169-189 (AQES…MGPG). A coiled-coil region spans residues 54–129 (LEEKVKSCRC…AKKTQKEEHS (76 aa)). Residues 130–142 (SQAGPAQAQGSPF) are compositionally biased toward polar residues. The DH domain occupies 265–440 (KRQTVALELL…RVFISHYTLL (176 aa)). Disordered stretches follow at residues 498 to 541 (LQPY…DWEL), 668 to 687 (RPEH…AGSS), and 702 to 745 (AKPL…RAAQ). Arginine 757 carries the omega-N-methylarginine modification. Positions 787–800 (DTTRFCPKEERESE) are enriched in basic and acidic residues. The segment at 787 to 844 (DTTRFCPKEERESEQTSFSDQNPRQDQKGGFRSSFRKLFKKKNGNATGEDFCGPWGWW) is disordered. Residues 820 to 829 (SFRKLFKKKN) are compositionally biased toward basic residues.

Functionally, may act as a guanine-nucleotide releasing factor. The polypeptide is Rho guanine nucleotide exchange factor 33 (ARHGEF33) (Homo sapiens (Human)).